Reading from the N-terminus, the 284-residue chain is NAD kinase (284 aa).

The active-site Proton acceptor is the Asp70. NAD(+)-binding positions include Asp70–Gly71, Asn139–Glu140, Lys167, Asp169, Leu177, Thr180–Ser185, and Gln236.

Belongs to the NAD kinase family. It depends on a divalent metal cation as a cofactor.

It localises to the cytoplasm. It catalyses the reaction NAD(+) + ATP = ADP + NADP(+) + H(+). Its function is as follows. Involved in the regulation of the intracellular balance of NAD and NADP, and is a key enzyme in the biosynthesis of NADP. Catalyzes specifically the phosphorylation on 2'-hydroxyl of the adenosine moiety of NAD to yield NADP. This is NAD kinase from Helicobacter pylori (strain P12).